The following is a 491-amino-acid chain: UDP-N-acetylmuramate--L-alanine ligase (491 aa).

126–132 is a binding site for ATP; the sequence is GTHGKTT.

It belongs to the MurCDEF family.

Its subcellular location is the cytoplasm. It catalyses the reaction UDP-N-acetyl-alpha-D-muramate + L-alanine + ATP = UDP-N-acetyl-alpha-D-muramoyl-L-alanine + ADP + phosphate + H(+). The protein operates within cell wall biogenesis; peptidoglycan biosynthesis. Cell wall formation. This chain is UDP-N-acetylmuramate--L-alanine ligase, found in Escherichia coli (strain SMS-3-5 / SECEC).